The primary structure comprises 479 residues: U6 small nuclear RNA (adenine-(43)-N(6))-methyltransferase (479 aa).

Positions 82, 108, 131, 164, and 184 each coordinate S-adenosyl-L-methionine. The tract at residues 420–424 is involved in dlc-1 binding; the sequence is DNASQ.

It belongs to the methyltransferase superfamily. METTL16/RlmF family. In terms of assembly, self-associates. Interacts with dlc-1; the interaction is direct, and is required for nuclear localization of mett-10. In terms of tissue distribution, expressed in the intestine, vulva, and cells of the somatic gonad including distal tip cells, gonadal sheath cells and spermatheca.

The protein localises to the nucleus. It carries out the reaction an adenosine in mRNA + S-adenosyl-L-methionine = an N(6)-methyladenosine in mRNA + S-adenosyl-L-homocysteine + H(+). The catalysed reaction is adenosine in U6 snRNA + S-adenosyl-L-methionine = N(6)-methyladenosine in U6 snRNA + S-adenosyl-L-homocysteine + H(+). Functionally, RNA N6-methyltransferase that methylates adenosine residues at the N(6) position of a subset of RNAs and is involved in S-adenosyl-L-methionine homeostasis by regulating splicing of S-adenosylmethionine synthase transcripts (sams-3, sams-4 and sams-5). Able to N6-methylate a subset of mRNAs containing the 5'UACAGAAAC-3' nonamer sequence. Plays a key role in S-adenosyl-L-methionine homeostasis: under rich-diet conditions, catalyzes N6-methylation of S-adenosylmethionine synthase mRNAs (sams-3, sams-4 and sams-5), directly inhibiting splicing and protein production of S-adenosylmethionine synthase. In addition to mRNAs, also able to mediate N6-methylation of U6 small nuclear RNA (U6 snRNA). Required for gamete production, inhibiting germ cell proliferative fate and ensuring germ cell meiotic development. Also promotes progression of the mitotic cell cycle in those germ cells that continue to proliferate. Plays a role in the development of the vulva, somatic gonad and embryo. In Caenorhabditis elegans, this protein is U6 small nuclear RNA (adenine-(43)-N(6))-methyltransferase.